We begin with the raw amino-acid sequence, 219 residues long: Large ribosomal subunit protein uL29m (219 aa).

The disordered stretch occupies residues 77 to 97 (ASKYPLPKPVSPEKLEKREST). Over residues 87 to 97 (SPEKLEKREST) the composition is skewed to basic and acidic residues.

This sequence belongs to the universal ribosomal protein uL29 family. In terms of assembly, component of the mitochondrial large ribosomal subunit. Mature mitochondrial ribosomes consist of a small (37S) and a large (54S) subunit. The 37S subunit contains at least 33 different proteins and 1 molecule of RNA (15S). The 54S subunit contains at least 45 different proteins and 1 molecule of RNA (21S).

Its subcellular location is the mitochondrion. The protein is Large ribosomal subunit protein uL29m (mrpl4) of Emericella nidulans (strain FGSC A4 / ATCC 38163 / CBS 112.46 / NRRL 194 / M139) (Aspergillus nidulans).